The sequence spans 541 residues: Peptidyl-prolyl isomerase cwc-27 (541 aa).

One can recognise a PPIase cyclophilin-type domain in the interval 11–193; sequence PTASAIIHTT…YPIKITRIEI (183 aa). Disordered stretches follow at residues 199–443 and 513–541; these read DDMQ…GQAD and TLKEEKKATRDAKTGGSSRAWDRGRRDRH. Basic and acidic residues-rich tracts occupy residues 279-307, 316-348, and 361-374; these read AKRDAKPVANDVPKREEKPEPKPVKESRR, QKKEQPPKKHYSEHSSPEPEEPKKKSLLEKTNE, and IHSEPVKQEKKKSA. A compositionally biased stretch (acidic residues) spans 432–442; sequence DVEDGEQDGQA. Basic and acidic residues-rich tracts occupy residues 513-525 and 532-541; these read TLKEEKKATRDAK and AWDRGRRDRH.

This sequence belongs to the cyclophilin-type PPIase family. CWC27 subfamily. As to quaternary structure, associated with the spliceosome.

The protein resides in the cytoplasm. It localises to the nucleus. It carries out the reaction [protein]-peptidylproline (omega=180) = [protein]-peptidylproline (omega=0). In terms of biological role, PPIases accelerate the folding of proteins. It catalyzes the cis-trans isomerization of proline imidic peptide bonds in oligopeptides. Involved in pre-mRNA splicing. The polypeptide is Peptidyl-prolyl isomerase cwc-27 (cwc-27) (Neurospora crassa (strain ATCC 24698 / 74-OR23-1A / CBS 708.71 / DSM 1257 / FGSC 987)).